We begin with the raw amino-acid sequence, 179 residues long: MTDNNIENNEEEIRKAPSANDREELTELKAQIEELKDKLIRTTAEIDNTRKRLEKARDEAKDYAIATFAKELLNVSDNLARALAHTPAKLDVEVINIIEGVQMTKDELDKIFHKHHIEEIKPEIGSMFDYNLHNAISQIDNTKYAPNSVITVMQSGYKIKDRLLRPATVQVTKKPKQEE.

A disordered region spans residues 1–22 (MTDNNIENNEEEIRKAPSANDR). Residues 11-22 (EEIRKAPSANDR) show a composition bias toward basic and acidic residues.

The protein belongs to the GrpE family. As to quaternary structure, homodimer.

The protein resides in the cytoplasm. Its function is as follows. Participates actively in the response to hyperosmotic and heat shock by preventing the aggregation of stress-denatured proteins, in association with DnaK and GrpE. It is the nucleotide exchange factor for DnaK and may function as a thermosensor. Unfolded proteins bind initially to DnaJ; upon interaction with the DnaJ-bound protein, DnaK hydrolyzes its bound ATP, resulting in the formation of a stable complex. GrpE releases ADP from DnaK; ATP binding to DnaK triggers the release of the substrate protein, thus completing the reaction cycle. Several rounds of ATP-dependent interactions between DnaJ, DnaK and GrpE are required for fully efficient folding. The protein is Protein GrpE of Rickettsia canadensis (strain McKiel).